Consider the following 355-residue polypeptide: Carbohydrate sulfotransferase 10 (355 aa).

Residues 1–6 are Cytoplasmic-facing; it reads MHHRWL. The helical; Signal-anchor for type II membrane protein transmembrane segment at 7–27 threads the bilayer; the sequence is LLVACFWVLFMLMVASKLITL. Residues 28 to 355 lie on the Lumenal side of the membrane; that stretch reads TMKDPEGYGN…FGYKEPTFLF (328 aa). 2 N-linked (GlcNAc...) asparagine glycosylation sites follow: Asn-93 and Asn-98. 3'-phosphoadenylyl sulfate contacts are provided by residues 126-132 and 188-196; these read PKVGNTQ and RDPFERLIS. Residue Asn-316 is glycosylated (N-linked (GlcNAc...) asparagine).

This sequence belongs to the sulfotransferase 2 family.

It is found in the golgi apparatus membrane. In terms of biological role, catalyzes the transfer of sulfate to position 3 of terminal glucuronic acid of both protein- and lipid-linked oligosaccharides. Participates in biosynthesis of HNK-1 carbohydrate structure, a sulfated glucuronyl-lactosaminyl residue carried by many neural recognition molecules. This Xenopus laevis (African clawed frog) protein is Carbohydrate sulfotransferase 10 (chst10).